The sequence spans 400 residues: Nicotinate phosphoribosyltransferase (400 aa).

Position 220 is a phosphohistidine; by autocatalysis (His220).

It belongs to the NAPRTase family. Transiently phosphorylated on a His residue during the reaction cycle. Phosphorylation strongly increases the affinity for substrates and increases the rate of nicotinate D-ribonucleotide production. Dephosphorylation regenerates the low-affinity form of the enzyme, leading to product release.

It catalyses the reaction nicotinate + 5-phospho-alpha-D-ribose 1-diphosphate + ATP + H2O = nicotinate beta-D-ribonucleotide + ADP + phosphate + diphosphate. It functions in the pathway cofactor biosynthesis; NAD(+) biosynthesis; nicotinate D-ribonucleotide from nicotinate: step 1/1. In terms of biological role, catalyzes the synthesis of beta-nicotinate D-ribonucleotide from nicotinate and 5-phospho-D-ribose 1-phosphate at the expense of ATP. The polypeptide is Nicotinate phosphoribosyltransferase (Salmonella newport (strain SL254)).